The sequence spans 589 residues: Serine/threonine-protein phosphatase 2A 65 kDa regulatory subunit A alpha isoform (589 aa).

Position 2 is an N-acetylalanine (Ala2). HEAT repeat units lie at residues 8–46 (DSLY…GVER), 47–84 (TRSE…GGPE), 85–123 (YVHC…SPSD), 124–161 (LEAH…VSSA), 162–200 (VKAE…ELDN), 201–239 (VKSE…PQED), 240–278 (LEAL…GPEI), 279–321 (TKTD…RENV), 322–360 (IMTQ…GKDS), 361–399 (TIEH…GIRQ), 400–438 (LSQS…GVEF), 439–477 (FDEK…GKEW), 478–516 (AHAT…GQDI), 517–555 (TTKH…DNST), and 556–589 (LQSE…LSLA). The tract at residues 8-399 (DSLYPIAVLI…CVNEVIGIRQ (392 aa)) is PP2A subunit B binding. The polyoma small and medium T antigens Binding stretch occupies residues 47 to 321 (TRSELLPFLT…NLSADCRENV (275 aa)). The interval 85–239 (YVHCLLPPLE…NIAQLLPQED (155 aa)) is SV40 small T antigen binding. The residue at position 280 (Lys280) is an N6-acetyllysine. The interval 400-589 (LSQSLLPAIV…QEALTVLSLA (190 aa)) is PP2A subunit C binding.

It belongs to the phosphatase 2A regulatory subunit A family. In terms of assembly, PP2A consists of a common heterodimeric core enzyme, composed of PPP2CA a 36 kDa catalytic subunit (subunit C) and PPP2R1A a 65 kDa constant regulatory subunit (PR65 or subunit A), that associates with a variety of regulatory subunits. Proteins that associate with the core dimer include three families of regulatory subunits B (the R2/B/PR55/B55, R3/B''/PR72/PR130/PR59 and R5/B'/B56 families), the 48 kDa variable regulatory subunit, viral proteins, and cell signaling molecules. Found in a complex with at least ARL2, PPP2CB, PPP2R1A, PPP2R2A, PPP2R5E and TBCD. Interacts with the PP2A C catalytic subunit PPP2CA. Interacts with the PP2A B subunit PPP2R2A. Interacts with the PP2A B subunit PPP2R5D. Interacts with FOXO1; the interaction dephosphorylates FOXO1 on AKT-mediated phosphorylation sites. Interacts with IPO9. Interacts with TP53 and SGO1. Interacts with PLA2G16; this interaction might decrease PP2A activity. Interacts with CTTNBP2NL. Interacts with GNA12; the interaction promotes protein phosphatase 2A activation causing dephosphorylation of MAPT. Interacts with CIP2A; this interaction stabilizes CIP2A. Interacts with PABIR1/FAM122A. Interacts with ADCY8; antagonizes interaction between ADCY8 and calmodulin. Interacts with CRTC3 (when phosphorylated at 'Ser-391'). Interacts with SPRY2. Part of the core of STRIPAK complexes composed of PP2A catalytic and scaffolding subunits, the striatins (PP2A regulatory subunits), the striatin-associated proteins MOB4, STRIP1 and STRIP2, PDCD10 and members of the STE20 kinases, such as STK24 and STK26. Component of the Integrator-PP2A (INTAC) complex, composed of the Integrator core complex and protein phosphatase 2A subunits PPP2CA and PPP2R1A.

The protein localises to the cytoplasm. It is found in the nucleus. It localises to the chromosome. Its subcellular location is the centromere. The protein resides in the lateral cell membrane. The protein localises to the cell projection. It is found in the dendrite. The PR65 subunit of protein phosphatase 2A serves as a scaffolding molecule to coordinate the assembly of the catalytic subunit and a variable regulatory B subunit. Upon interaction with GNA12 promotes dephosphorylation of microtubule associated protein TAU/MAPT. Required for proper chromosome segregation and for centromeric localization of SGO1 in mitosis. Together with RACK1 adapter, mediates dephosphorylation of AKT1 at 'Ser-473', preventing AKT1 activation and AKT-mTOR signaling pathway. Dephosphorylation of AKT1 is essential for regulatory T-cells (Treg) homeostasis and stability. Part of the striatin-interacting phosphatase and kinase (STRIPAK) complexes. STRIPAK complexes have critical roles in protein (de)phosphorylation and are regulators of multiple signaling pathways including Hippo, MAPK, nuclear receptor and cytoskeleton remodeling. Different types of STRIPAK complexes are involved in a variety of biological processes such as cell growth, differentiation, apoptosis, metabolism and immune regulation. Key mediator of a quality checkpoint during transcription elongation as part of the Integrator-PP2A (INTAC) complex. The INTAC complex drives premature transcription termination of transcripts that are unfavorably configured for transcriptional elongation: within the INTAC complex, acts as a scaffolding subunit for PPP2CA, which catalyzes dephosphorylation of the C-terminal domain (CTD) of Pol II subunit POLR2A/RPB1 and SUPT5H/SPT5, thereby preventing transcriptional elongation. Regulates the recruitment of the SKA complex to kinetochores. This chain is Serine/threonine-protein phosphatase 2A 65 kDa regulatory subunit A alpha isoform (PPP2R1A), found in Bos taurus (Bovine).